The following is an 84-amino-acid chain: Delta-thalatoxin-Cad1a (84 aa).

Residues M1 to A19 form the signal peptide. Positions M20–A33 are excised as a propeptide. 3 cysteine pairs are disulfide-bonded: C38/C78, C40/C68, and C61/C79.

This sequence belongs to the sea anemone sodium channel inhibitory toxin family. Type II subfamily.

Its subcellular location is the secreted. It localises to the nematocyst. Binds specifically to the voltage-gated sodium channel (Nav) and delays its inactivation. This is Delta-thalatoxin-Cad1a from Cryptodendrum adhaesivum (Adhesive sea anemone).